We begin with the raw amino-acid sequence, 152 residues long: Protein-export protein SecB (152 aa).

It belongs to the SecB family. Homotetramer, a dimer of dimers. One homotetramer interacts with 1 SecA dimer.

Its subcellular location is the cytoplasm. Its function is as follows. One of the proteins required for the normal export of preproteins out of the cell cytoplasm. It is a molecular chaperone that binds to a subset of precursor proteins, maintaining them in a translocation-competent state. It also specifically binds to its receptor SecA. This Rickettsia typhi (strain ATCC VR-144 / Wilmington) protein is Protein-export protein SecB.